Here is a 206-residue protein sequence, read N- to C-terminus: Large ribosomal subunit protein mL62 (206 aa).

The transit peptide at 1 to 29 (MATAWCLPWTLRRAGAWLLTPPLRCPRRA) directs the protein to the mitochondrion.

The protein belongs to the prokaryotic/mitochondrial release factor family. Mitochondrion-specific ribosomal protein mL62 subfamily. Component of the mitochondrial 39S ribosomal subunit.

The protein resides in the mitochondrion. It catalyses the reaction an N-acyl-L-alpha-aminoacyl-tRNA + H2O = an N-acyl-L-amino acid + a tRNA + H(+). Functionally, essential peptidyl-tRNA hydrolase component of the mitochondrial large ribosomal subunit. Acts as a codon-independent translation release factor that has lost all stop codon specificity and directs the termination of translation in mitochondrion, possibly in case of abortive elongation. May be involved in the hydrolysis of peptidyl-tRNAs that have been prematurely terminated and thus in the recycling of stalled mitochondrial ribosomes. In Ailuropoda melanoleuca (Giant panda), this protein is Large ribosomal subunit protein mL62.